We begin with the raw amino-acid sequence, 125 residues long: Large ribosomal subunit protein bL12 (125 aa).

It belongs to the bacterial ribosomal protein bL12 family. Homodimer. Part of the ribosomal stalk of the 50S ribosomal subunit. Forms a multimeric L10(L12)X complex, where L10 forms an elongated spine to which 2 to 4 L12 dimers bind in a sequential fashion. Binds GTP-bound translation factors.

Forms part of the ribosomal stalk which helps the ribosome interact with GTP-bound translation factors. Is thus essential for accurate translation. This Cereibacter sphaeroides (strain ATCC 17023 / DSM 158 / JCM 6121 / CCUG 31486 / LMG 2827 / NBRC 12203 / NCIMB 8253 / ATH 2.4.1.) (Rhodobacter sphaeroides) protein is Large ribosomal subunit protein bL12.